The chain runs to 225 residues: Orotate phosphoribosyltransferase (225 aa).

Residues Lys26, 73–74 (YK), Arg100, Lys101, Lys104, His106, and 127–135 (EDVTTAGTS) each bind 5-phospho-alpha-D-ribose 1-diphosphate. Positions 131 and 160 each coordinate orotate.

Belongs to the purine/pyrimidine phosphoribosyltransferase family. PyrE subfamily. Homodimer. Mg(2+) is required as a cofactor.

The catalysed reaction is orotidine 5'-phosphate + diphosphate = orotate + 5-phospho-alpha-D-ribose 1-diphosphate. The protein operates within pyrimidine metabolism; UMP biosynthesis via de novo pathway; UMP from orotate: step 1/2. Catalyzes the transfer of a ribosyl phosphate group from 5-phosphoribose 1-diphosphate to orotate, leading to the formation of orotidine monophosphate (OMP). The sequence is that of Orotate phosphoribosyltransferase from Lachnoclostridium phytofermentans (strain ATCC 700394 / DSM 18823 / ISDg) (Clostridium phytofermentans).